We begin with the raw amino-acid sequence, 209 residues long: E3 ubiquitin-protein ligase RNF138 (209 aa).

The RING-type zinc finger occupies 18–58 (CPVCQEVLKTPVRTAACQHVFCRKCFLTAMRESGIHCPLCR). The Zn(2+) site is built by cysteine 86, cysteine 89, histidine 101, and cysteine 105. The C2HC RNF-type zinc finger occupies 86 to 105 (CRCCSKKIKFYRMRHHYKSC). The tract at residues 125–154 (QDSVRSSNRSETSASDNTETYQEDTSSSGH) is disordered. Threonine 142 bears the Phosphothreonine mark. The C2H2-type zinc-finger motif lies at 157–180 (FKCPLCQESNFTRQRLLDHCNSNH). The UIM domain maps to 189-207 (LQLDEETQYQTAVEESFQV).

In terms of assembly, interacts with NLK. Interacts with XRCC5/Ku80. Interacts with RBBP8/CtIP. In terms of processing, auto-ubiquitinated.

It localises to the chromosome. It catalyses the reaction S-ubiquitinyl-[E2 ubiquitin-conjugating enzyme]-L-cysteine + [acceptor protein]-L-lysine = [E2 ubiquitin-conjugating enzyme]-L-cysteine + N(6)-ubiquitinyl-[acceptor protein]-L-lysine.. It functions in the pathway protein modification; protein ubiquitination. In terms of biological role, E3 ubiquitin-protein ligase involved in DNA damage response by promoting DNA resection and homologous recombination. Recruited to sites of double-strand breaks following DNA damage and specifically promotes double-strand break repair via homologous recombination. Two different, non-exclusive, mechanisms have been proposed. According to a report, regulates the choice of double-strand break repair by favoring homologous recombination over non-homologous end joining (NHEJ): acts by mediating ubiquitination of XRCC5/Ku80, leading to remove the Ku complex from DNA breaks, thereby promoting homologous recombination. According to another report, cooperates with UBE2Ds E2 ubiquitin ligases (UBE2D1, UBE2D2, UBE2D3 or UBE2D4) to promote homologous recombination by mediating ubiquitination of RBBP8/CtIP. Together with NLK, involved in the ubiquitination and degradation of TCF/LEF. Also exhibits auto-ubiquitination activity in combination with UBE2K. May act as a negative regulator in the Wnt/beta-catenin-mediated signaling pathway. The polypeptide is E3 ubiquitin-protein ligase RNF138 (Rattus norvegicus (Rat)).